The sequence spans 154 residues: Endoribonuclease YbeY (154 aa).

Zn(2+)-binding residues include His-114, His-118, and His-124.

It belongs to the endoribonuclease YbeY family. The cofactor is Zn(2+).

Its subcellular location is the cytoplasm. Single strand-specific metallo-endoribonuclease involved in late-stage 70S ribosome quality control and in maturation of the 3' terminus of the 16S rRNA. The polypeptide is Endoribonuclease YbeY (Aggregatibacter actinomycetemcomitans (Actinobacillus actinomycetemcomitans)).